The chain runs to 1265 residues: Kinesin-like protein Klp98A (1265 aa).

One can recognise a Kinesin motor domain in the interval 3–364 (SLKVAVRVRP…LRYANRAKNI (362 aa)). 100–107 (GQTGSGKT) contributes to the ATP binding site. Disordered stretches follow at residues 597–621 (GASPYKRPERQYYPQRPMSRDDPEL), 828–864 (EAESQAMRAKKQNMKLQLGNKSMSTSTSTNEADDVSK), and 884–954 (VSSP…CTPS). 2 coiled-coil regions span residues 619-670 (PELQ…EEMD) and 768-848 (AQFI…LGNK). Composition is skewed to polar residues over residues 846–857 (GNKSMSTSTSTN), 884–901 (VSSPTITEGQQSPLSNCS), and 917–927 (SGSSEETSRTC). The span at 933 to 946 (SGSGSGSVGIGGSG) shows a compositional bias: gly residues. The stretch at 1035–1071 (DLNKAQLDEHIADLQDLQRRYIQMEQEMLQSVQDLEA) forms a coiled coil. The 131-residue stretch at 1129–1259 (GEHFITIPSF…SFFKKGLFEN (131 aa)) folds into the PX domain.

Belongs to the TRAFAC class myosin-kinesin ATPase superfamily. Kinesin family. Interacts with Atg8a and Rab14.

It is found in the early endosome. In terms of biological role, plus end-directed motor protein involved in asymmetric cell division of sensory organ precursor (SOP) cells by playing a role in the asymmetric localization of Sara-expressing endosomes to the pIIa daughter cell but not to the pIIb cell. Targets Sara-expressing endosomes to the central spindle which is symmetrically arranged in early cell division. During late cytokinesis, central spindle asymmetry is generated by enrichment of Patronin on the pIIb side which protects microtubules from depolymerization by Klp10A while unprotected microtubules on the pIIa side are disassembled by Klp10A, leading to the asymmetric delivery of Sara-expressing endosomes to the pIIa daughter cell. Also plays a role in regulation of autophagosome formation, fusion and positioning and is required for normal localization of Rab14. This chain is Kinesin-like protein Klp98A, found in Drosophila melanogaster (Fruit fly).